Reading from the N-terminus, the 1631-residue chain is ALK tyrosine kinase receptor (1631 aa).

The N-terminal stretch at 1–18 (MGSVGLLGLLLLRLSVTA) is a signal peptide. The Extracellular portion of the chain corresponds to 19–1053 (SGSGAGTGSG…PHLPLSLVLS (1035 aa)). Residues 20–53 (GSGAGTGSGTGSGTGTGTGQLVGSPATGPALQPR) are disordered. Residues 21 to 39 (SGAGTGSGTGSGTGTGTGQ) are compositionally biased toward gly residues. Residues 60-82 (RLQRKSLAVDFVVPSLFRVYARD) are heparin-binding region. Asparagine 185, asparagine 260, asparagine 301, asparagine 340, asparagine 427, asparagine 440, asparagine 461, asparagine 579, asparagine 587, and asparagine 643 each carry an N-linked (GlcNAc...) asparagine glycan. The MAM 1 domain occupies 280–443 (LECSFDFPCE…DFFALKNCSE (164 aa)). In terms of domain architecture, MAM 2 spans 494–652 (FYCNFENGFC…NISISLDCYL (159 aa)). Cysteines 703 and 716 form a disulfide. A glycan (N-linked (GlcNAc...) asparagine) is linked at asparagine 724. Cysteine 798 and cysteine 809 are joined by a disulfide. Residues asparagine 823, asparagine 878, asparagine 879, and asparagine 901 are each glycosylated (N-linked (GlcNAc...) asparagine). Cysteine 921 and cysteine 943 are oxidised to a cystine. Asparagine 1001 is a glycosylation site (N-linked (GlcNAc...) asparagine). Cystine bridges form between cysteine 1002–cysteine 1010, cysteine 1005–cysteine 1021, and cysteine 1023–cysteine 1036. The segment at 1002-1040 (CSHCEGDECHMDPESHKVICFCDHGTVLAEDGVSCIVSP) is EGF-like. The helical transmembrane segment at 1054-1074 (VVTSALVAALVLAFSGIMIVY) threads the bilayer. The Cytoplasmic segment spans residues 1075 to 1631 (RRKHQELQAM…DALLKTPPGP (557 aa)). In terms of domain architecture, Protein kinase spans 1131–1407 (ITLIRGLGHG…IEYCTQDPDV (277 aa)). Residues 1137–1145 (LGHGAFGEV) and lysine 1165 contribute to the ATP site. Aspartate 1264 (proton acceptor) is an active-site residue. Disordered stretches follow at residues 1423 to 1493 (EEKV…GHVN), 1526 to 1554 (WFTEKPTKKNNPPATKGHHDRGNLGREGS), and 1609 to 1631 (FEGTTAPGSSQYEDALLKTPPGP).

In terms of assembly, homodimer; homodimerizes following heparin- and ligand-binding. Interacts with CBL, IRS1, PIK3R1 and PLCG1. Interacts with FRS2 and SHC1. Interacts with PTN and MDK. Post-translationally, phosphorylated at tyrosine residues by autocatalysis, which activates kinase activity. In cells not stimulated by a ligand, receptor protein tyrosine phosphatase beta and zeta complex (PTPRB/PTPRZ1) dephosphorylates ALK at the sites in ALK that are undergoing autophosphorylation through autoactivation.

Its subcellular location is the cell membrane. It catalyses the reaction L-tyrosyl-[protein] + ATP = O-phospho-L-tyrosyl-[protein] + ADP + H(+). Its activity is regulated as follows. Activated upon ALKAL2 ligand-binding. ALKAL2-driven activation is coupled with heparin-binding. Following ligand-binding, homodimerizes and autophosphorylates, activating its kinase activity. Inactivated through dephosphorylation by receptor protein tyrosine phosphatase beta and zeta complex (PTPRB/PTPRZ1) when there is no stimulation by a ligand. Functionally, neuronal receptor tyrosine kinase that is essentially and transiently expressed in specific regions of the central and peripheral nervous systems and plays an important role in the genesis and differentiation of the nervous system. Also acts as a key thinness protein involved in the resistance to weight gain: in hypothalamic neurons, controls energy expenditure acting as a negative regulator of white adipose tissue lipolysis and sympathetic tone to fine-tune energy homeostasis. Following activation by ALKAL2 ligand at the cell surface, transduces an extracellular signal into an intracellular response. In contrast, ALKAL1 is not a potent physiological ligand for ALK. Ligand-binding to the extracellular domain induces tyrosine kinase activation, leading to activation of the mitogen-activated protein kinase (MAPK) pathway. Phosphorylates almost exclusively at the first tyrosine of the Y-x-x-x-Y-Y motif. Induces tyrosine phosphorylation of CBL, FRS2, IRS1 and SHC1, as well as of the MAP kinases MAPK1/ERK2 and MAPK3/ERK1. ALK activation may also be regulated by pleiotrophin (PTN) and midkine (MDK). PTN-binding induces MAPK pathway activation, which is important for the anti-apoptotic signaling of PTN and regulation of cell proliferation. MDK-binding induces phosphorylation of the ALK target insulin receptor substrate (IRS1), activates mitogen-activated protein kinases (MAPKs) and PI3-kinase, resulting also in cell proliferation induction. Drives NF-kappa-B activation, probably through IRS1 and the activation of the AKT serine/threonine kinase. Recruitment of IRS1 to activated ALK and the activation of NF-kappa-B are essential for the autocrine growth and survival signaling of MDK. In Canis lupus familiaris (Dog), this protein is ALK tyrosine kinase receptor.